We begin with the raw amino-acid sequence, 388 residues long: 1-deoxy-D-xylulose 5-phosphate reductoisomerase (388 aa).

Residues Thr-13, Gly-14, Ser-15, Ile-16, Arg-40, Asn-41, and Asn-124 each contribute to the NADPH site. Residue Lys-125 participates in 1-deoxy-D-xylulose 5-phosphate binding. Residue Glu-126 participates in NADPH binding. Asp-150 contacts Mn(2+). The 1-deoxy-D-xylulose 5-phosphate site is built by Ser-151, Glu-152, Ser-176, and His-199. Glu-152 lines the Mn(2+) pocket. NADPH is bound at residue Gly-205. Ser-212, Asn-217, Lys-218, and Glu-221 together coordinate 1-deoxy-D-xylulose 5-phosphate. Mn(2+) is bound at residue Glu-221.

The protein belongs to the DXR family. As to quaternary structure, homodimer. The cofactor is Mg(2+). Requires Mn(2+) as cofactor. It depends on Co(2+) as a cofactor.

The enzyme catalyses 2-C-methyl-D-erythritol 4-phosphate + NADP(+) = 1-deoxy-D-xylulose 5-phosphate + NADPH + H(+). Its pathway is isoprenoid biosynthesis; isopentenyl diphosphate biosynthesis via DXP pathway; isopentenyl diphosphate from 1-deoxy-D-xylulose 5-phosphate: step 1/6. With respect to regulation, competitively inhibited by the antibiotic fosmidomycin. Its function is as follows. Catalyzes the NADPH-dependent rearrangement and reduction of 1-deoxy-D-xylulose-5-phosphate (DXP) to 2-C-methyl-D-erythritol 4-phosphate (MEP). Cannot use NADH instead of NADPH as the reducing agent. The sequence is that of 1-deoxy-D-xylulose 5-phosphate reductoisomerase from Zymomonas mobilis subsp. mobilis (strain ATCC 31821 / ZM4 / CP4).